The sequence spans 236 residues: Urease accessory protein UreF (236 aa).

It belongs to the UreF family. As to quaternary structure, ureD, UreF and UreG form a complex that acts as a GTP-hydrolysis-dependent molecular chaperone, activating the urease apoprotein by helping to assemble the nickel containing metallocenter of UreC. The UreE protein probably delivers the nickel.

Its subcellular location is the cytoplasm. Functionally, required for maturation of urease via the functional incorporation of the urease nickel metallocenter. The sequence is that of Urease accessory protein UreF from Synechocystis sp. (strain ATCC 27184 / PCC 6803 / Kazusa).